A 361-amino-acid chain; its full sequence is Cyclin-Y-like protein 2 (361 aa).

The Cyclin N-terminal domain occupies M204–N286.

Belongs to the cyclin family. Cyclin Y subfamily.

The sequence is that of Cyclin-Y-like protein 2 (CCNYL2) from Homo sapiens (Human).